The chain runs to 363 residues: Ribosomal RNA large subunit methyltransferase M (363 aa).

S-adenosyl-L-methionine is bound by residues Ser-190, 223–226, Asp-242, Asp-262, and Asp-279; that span reads CPGG. The Proton acceptor role is filled by Lys-308.

It belongs to the class I-like SAM-binding methyltransferase superfamily. RNA methyltransferase RlmE family. RlmM subfamily. In terms of assembly, monomer.

It localises to the cytoplasm. It carries out the reaction cytidine(2498) in 23S rRNA + S-adenosyl-L-methionine = 2'-O-methylcytidine(2498) in 23S rRNA + S-adenosyl-L-homocysteine + H(+). In terms of biological role, catalyzes the 2'-O-methylation at nucleotide C2498 in 23S rRNA. This is Ribosomal RNA large subunit methyltransferase M from Vibrio atlanticus (strain LGP32) (Vibrio splendidus (strain Mel32)).